Reading from the N-terminus, the 543-residue chain is Phosphoenolpyruvate carboxykinase (ATP) (543 aa).

Position 244-251 (Gly-244–Thr-251) interacts with ATP.

It belongs to the phosphoenolpyruvate carboxykinase (ATP) family.

The catalysed reaction is oxaloacetate + ATP = phosphoenolpyruvate + ADP + CO2. Its pathway is carbohydrate biosynthesis; gluconeogenesis. The protein is Phosphoenolpyruvate carboxykinase (ATP) (PCK1) of Kluyveromyces lactis (strain ATCC 8585 / CBS 2359 / DSM 70799 / NBRC 1267 / NRRL Y-1140 / WM37) (Yeast).